The sequence spans 483 residues: Keratin, type II cytoskeletal 8 (483 aa).

Polar residues predominate over residues 1 to 16 (MSIRVTQKSYKVSTSG). The interval 1-41 (MSIRVTQKSYKVSTSGPRAFSSRSYTSGPGSRISSSSFSRV) is disordered. The segment at 1-90 (MSIRVTQKSY…DPNIQAVRTQ (90 aa)) is head. At serine 9 the chain carries Phosphoserine; by PKC/PRKCE. Residue lysine 11 forms a Glycyl lysine isopeptide (Lys-Gly) (interchain with G-Cter in SUMO2) linkage. Phosphoserine is present on residues serine 13, serine 15, serine 21, and serine 22. Arginine 23 is subject to Omega-N-methylarginine. Serine 24 is modified (phosphoserine; by PKC/PRKCE). A compositionally biased stretch (low complexity) spans 24–41 (SYTSGPGSRISSSSFSRV). Phosphothreonine is present on threonine 26. Residues serine 27 and serine 31 each carry the phosphoserine modification. Position 32 is an omega-N-methylarginine (arginine 32). Residues serine 34, serine 37, and serine 39 each carry the phosphoserine modification. Arginine 40 carries the post-translational modification Omega-N-methylarginine. Serine 43 and serine 44 each carry phosphoserine. The residue at position 47 (arginine 47) is an Asymmetric dimethylarginine; alternate. Omega-N-methylarginine; alternate is present on arginine 47. Serine 74 carries the post-translational modification Phosphoserine; by MAPK. Positions 91-126 (EKEQIKTLNNKFASFIDKVRFLEQQNKMLETKWSLL) are coil 1A. The IF rod domain occupies 91–402 (EKEQIKTLNN…KLLEGEESRL (312 aa)). Lysine 101 carries the post-translational modification N6-malonyllysine. Glycyl lysine isopeptide (Lys-Gly) (interchain with G-Cter in SUMO2) cross-links involve residues lysine 122 and lysine 130. The interval 127–143 (QQQKTARSNMDNMFESY) is linker 1. The coil 1B stretch occupies residues 144 to 235 (INNLRRQLET…QLYEEEIREL (92 aa)). Lysine 197 participates in a covalent cross-link: Glycyl lysine isopeptide (Lys-Gly) (interchain with G-Cter in SUMO1); alternate. Residue lysine 197 forms a Glycyl lysine isopeptide (Lys-Gly) (interchain with G-Cter in SUMO2); alternate linkage. Lysine 207 is modified (N6-acetyllysine). Tyrosine 228 bears the Phosphotyrosine mark. The linker 12 stretch occupies residues 236–259 (QSQISDTSVVLSMDNSRSLDMDSI). Phosphoserine is present on residues serine 253 and serine 258. A coil 2 region spans residues 260-398 (IAEVKAQYED…ATYRKLLEGE (139 aa)). Residues 261–382 (AEVKAQYEDI…EYQELMNVKL (122 aa)) are necessary for interaction with PNN. Lysine 264 participates in a covalent cross-link: Glycyl lysine isopeptide (Lys-Gly) (interchain with G-Cter in SUMO2). At serine 274 the chain carries Phosphoserine. A Glycyl lysine isopeptide (Lys-Gly) (interchain with G-Cter in SUMO2) cross-link involves residue lysine 285. At serine 291 the chain carries Phosphoserine. Residue lysine 295 forms a Glycyl lysine isopeptide (Lys-Gly) (interchain with G-Cter in SUMO2); alternate linkage. At lysine 295 the chain carries N6-acetyllysine; alternate. Lysine 304 is covalently cross-linked (Glycyl lysine isopeptide (Lys-Gly) (interchain with G-Cter in SUMO2)). Lysine 325 participates in a covalent cross-link: Glycyl lysine isopeptide (Lys-Gly) (interchain with G-Cter in SUMO2); alternate. Lysine 325 carries the post-translational modification N6-acetyllysine; alternate. Serine 330 carries the phosphoserine modification. Lysine 393 participates in a covalent cross-link: Glycyl lysine isopeptide (Lys-Gly) (interchain with G-Cter in SUMO2). A tail region spans residues 399–483 (ESRLESGMQN…VSESSDVLPK (85 aa)). Phosphoserine occurs at positions 400, 404, 410, 417, and 424. Serine 432 is modified (phosphoserine; by CaMK2 and MAPK). Lysine 472 participates in a covalent cross-link: Glycyl lysine isopeptide (Lys-Gly) (interchain with G-Cter in SUMO1); alternate. Lysine 472 participates in a covalent cross-link: Glycyl lysine isopeptide (Lys-Gly) (interchain with G-Cter in SUMO2); alternate. Serine 475, serine 477, and serine 478 each carry phosphoserine.

Belongs to the intermediate filament family. Heterotetramer of two type I and two type II keratins. Forms a heterodimer with KRT18. Associates with KRT20. Interacts with PLEC isoform 1C, when in a heterodimer with KRT18. Interacts with PNN. When associated with KRT19, interacts with DMD. Interacts with TCHP. Interacts with APEX1. Interacts with GPER1. Interacts with EPPK1. Interacts with PKP1 and PKP2. In terms of assembly, (Microbial infection) Interacts with hepatitis C virus/HCV core protein. Phosphorylation on serine residues is enhanced during EGF stimulation and mitosis. Ser-74 phosphorylation plays an important role in keratin filament reorganization. Post-translationally, O-glycosylated. O-GlcNAcylation at multiple sites increases solubility, and decreases stability by inducing proteasomal degradation. In terms of processing, O-glycosylated (O-GlcNAcylated), in a cell cycle-dependent manner. In terms of tissue distribution, observed in muscle fibers accumulating in the costameres of myoplasm at the sarcolemma membrane in structures that contain dystrophin and spectrin. Expressed in gingival mucosa and hard palate of the oral cavity.

Its subcellular location is the cytoplasm. The protein localises to the nucleus. The protein resides in the nucleoplasm. It localises to the nucleus matrix. Functionally, together with KRT19, helps to link the contractile apparatus to dystrophin at the costameres of striated muscle. The polypeptide is Keratin, type II cytoskeletal 8 (KRT8) (Homo sapiens (Human)).